The following is a 289-amino-acid chain: MTAQIINGKAIAEATLSETKSLIDKRLEKGLRAPTLAVILLGSDPASTIYVRNKRLACDKTGIRSLAYDLPDTTSEAELLALIKQLNQDDAVDGILVQSPLPAHIEEKKIIETISATKDVDGFHPYNIGRLAVRQPTLRSCTPYGVIKLLQSTGVRLLGLDAVVVGVSNHVGRPMALELLLAGCTVTSCHRHTKDLQASIARADIVVAAVGKPHLIKGEWIKPGAIVIDIGINRLADGSLCGDVEFDIAKTRAAWITPVPGGVGPMTVATLMQNTLTALELGESDQAPA.

NADP(+) contacts are provided by residues 166–168 (GVS) and I232.

Belongs to the tetrahydrofolate dehydrogenase/cyclohydrolase family. In terms of assembly, homodimer.

It carries out the reaction (6R)-5,10-methylene-5,6,7,8-tetrahydrofolate + NADP(+) = (6R)-5,10-methenyltetrahydrofolate + NADPH. The enzyme catalyses (6R)-5,10-methenyltetrahydrofolate + H2O = (6R)-10-formyltetrahydrofolate + H(+). Its pathway is one-carbon metabolism; tetrahydrofolate interconversion. Catalyzes the oxidation of 5,10-methylenetetrahydrofolate to 5,10-methenyltetrahydrofolate and then the hydrolysis of 5,10-methenyltetrahydrofolate to 10-formyltetrahydrofolate. This is Bifunctional protein FolD from Methylobacillus flagellatus (strain ATCC 51484 / DSM 6875 / VKM B-1610 / KT).